Reading from the N-terminus, the 354-residue chain is Protein ECM8 (354 aa).

May be involved in cell wall organization and biogenesis. The polypeptide is Protein ECM8 (ECM8) (Saccharomyces cerevisiae (strain ATCC 204508 / S288c) (Baker's yeast)).